A 178-amino-acid polypeptide reads, in one-letter code: Cell division protein SepF (178 aa).

Residues 21–46 (YESEQSVATHHDEERPQAQEREERRA) show a composition bias toward basic and acidic residues. The disordered stretch occupies residues 21–65 (YESEQSVATHHDEERPQAQEREERRAPAPVREVVREMPTVDAEEE).

The protein belongs to the SepF family. Homodimer. Interacts with FtsZ.

The protein localises to the cytoplasm. Cell division protein that is part of the divisome complex and is recruited early to the Z-ring. Probably stimulates Z-ring formation, perhaps through the cross-linking of FtsZ protofilaments. Its function overlaps with FtsA. The sequence is that of Cell division protein SepF from Paenarthrobacter aurescens (strain TC1).